We begin with the raw amino-acid sequence, 93 residues long: Integration host factor subunit beta (93 aa).

This sequence belongs to the bacterial histone-like protein family. As to quaternary structure, heterodimer of an alpha and a beta chain.

Functionally, this protein is one of the two subunits of integration host factor, a specific DNA-binding protein that functions in genetic recombination as well as in transcriptional and translational control. In Idiomarina loihiensis (strain ATCC BAA-735 / DSM 15497 / L2-TR), this protein is Integration host factor subunit beta.